Consider the following 485-residue polypeptide: GTPase Der (485 aa).

2 consecutive EngA-type G domains span residues 3-167 and 176-349; these read PTIA…PEPE and PVFA…NAAM. GTP is bound by residues 9 to 16, 56 to 60, 119 to 122, 182 to 189, 229 to 233, and 294 to 297; these read GRPNVGKS, DTGGF, NKGE, DTAGV, and NKWD. Residues 350 to 434 form the KH-like domain; that stretch reads IKMPTPKITR…PLRIQYNVSE (85 aa). Positions 435 to 485 are disordered; it reads NPYENAEDKPKKKPLRRVSLSNRIEKREGRKEEKNRFKKKTKVSVKKQFSK. Basic and acidic residues predominate over residues 457–469; the sequence is RIEKREGRKEEKN. Residues 470–485 show a composition bias toward basic residues; the sequence is RFKKKTKVSVKKQFSK.

It belongs to the TRAFAC class TrmE-Era-EngA-EngB-Septin-like GTPase superfamily. EngA (Der) GTPase family. In terms of assembly, associates with the 50S ribosomal subunit.

Functionally, GTPase that plays an essential role in the late steps of ribosome biogenesis. The chain is GTPase Der from Neisseria gonorrhoeae (strain NCCP11945).